The chain runs to 211 residues: MARSKSSNRWLEEHFSDQYVKKSHADGYRTRASYKLLELNDKDRLIRPGMLVVDLGAAPGGWSQVAGQQVGTHGRVVASDILPMDTLEGVEFIQGDFTDDSVFNQILLAIGDTPVDLVISDMAPNMSGINAVDQPQAMYLVELALDMAKRVLKPQGNFVAKVFHGEGYDQYLKDLKGCFEKVVIRKPDASRSRSREVYVVGKGFLGCQTVS.

S-adenosyl-L-methionine contacts are provided by Gly-60, Trp-62, Asp-80, Asp-96, and Asp-121. Lys-161 acts as the Proton acceptor in catalysis.

The protein belongs to the class I-like SAM-binding methyltransferase superfamily. RNA methyltransferase RlmE family.

The protein localises to the cytoplasm. The catalysed reaction is uridine(2552) in 23S rRNA + S-adenosyl-L-methionine = 2'-O-methyluridine(2552) in 23S rRNA + S-adenosyl-L-homocysteine + H(+). Specifically methylates the uridine in position 2552 of 23S rRNA at the 2'-O position of the ribose in the fully assembled 50S ribosomal subunit. The protein is Ribosomal RNA large subunit methyltransferase E of Cellvibrio japonicus (strain Ueda107) (Pseudomonas fluorescens subsp. cellulosa).